The chain runs to 341 residues: Dihydroorotate dehydrogenase (quinone) (341 aa).

FMN is bound by residues 59-63 (AGLDK) and threonine 83. Residue lysine 63 coordinates substrate. 108–112 (NRMGF) provides a ligand contact to substrate. Residues asparagine 136 and asparagine 169 each contribute to the FMN site. Asparagine 169 contacts substrate. Residue serine 172 is the Nucleophile of the active site. Asparagine 174 is a substrate binding site. FMN contacts are provided by lysine 214 and threonine 242. Substrate is bound at residue 243–244 (NT). FMN-binding positions include glycine 265, glycine 294, and 315-316 (YS).

This sequence belongs to the dihydroorotate dehydrogenase family. Type 2 subfamily. Monomer. FMN serves as cofactor.

Its subcellular location is the cell membrane. The catalysed reaction is (S)-dihydroorotate + a quinone = orotate + a quinol. The protein operates within pyrimidine metabolism; UMP biosynthesis via de novo pathway; orotate from (S)-dihydroorotate (quinone route): step 1/1. Its function is as follows. Catalyzes the conversion of dihydroorotate to orotate with quinone as electron acceptor. The chain is Dihydroorotate dehydrogenase (quinone) from Neisseria meningitidis serogroup C (strain 053442).